The primary structure comprises 143 residues: uncharacterized protein (143 aa).

The disordered stretch occupies residues 1 to 143; it reads MRSSRQKASI…WFSQTVKRKA (143 aa). Basic and acidic residues-rich tracts occupy residues 34–46 and 61–76; these read ISAE…KHLD and EYQK…RKIV. Composition is skewed to acidic residues over residues 77–93 and 103–115; these read DDEE…PEEE and YEEE…PDLA.

This is an uncharacterized protein from Bacillus subtilis (strain 168).